The primary structure comprises 192 residues: Probable nicotinate-nucleotide adenylyltransferase (192 aa).

The protein belongs to the NadD family.

The catalysed reaction is nicotinate beta-D-ribonucleotide + ATP + H(+) = deamido-NAD(+) + diphosphate. It participates in cofactor biosynthesis; NAD(+) biosynthesis; deamido-NAD(+) from nicotinate D-ribonucleotide: step 1/1. In terms of biological role, catalyzes the reversible adenylation of nicotinate mononucleotide (NaMN) to nicotinic acid adenine dinucleotide (NaAD). This Cytophaga hutchinsonii (strain ATCC 33406 / DSM 1761 / CIP 103989 / NBRC 15051 / NCIMB 9469 / D465) protein is Probable nicotinate-nucleotide adenylyltransferase.